A 93-amino-acid polypeptide reads, in one-letter code: Large ribosomal subunit protein uL23 (93 aa).

Belongs to the universal ribosomal protein uL23 family. As to quaternary structure, part of the 50S ribosomal subunit. Contacts protein L29, and trigger factor when it is bound to the ribosome.

One of the early assembly proteins it binds 23S rRNA. One of the proteins that surrounds the polypeptide exit tunnel on the outside of the ribosome. Forms the main docking site for trigger factor binding to the ribosome. This is Large ribosomal subunit protein uL23 from Campylobacter jejuni subsp. jejuni serotype O:2 (strain ATCC 700819 / NCTC 11168).